A 418-amino-acid chain; its full sequence is Serine--tRNA ligase (418 aa).

L-serine is bound at residue 227 to 229 (TSE). Residues 258–260 (RRE) and valine 274 each bind ATP. Residue glutamate 281 coordinates L-serine. An ATP-binding site is contributed by 345–348 (ELTS). Position 380 (threonine 380) interacts with L-serine.

It belongs to the class-II aminoacyl-tRNA synthetase family. Type-1 seryl-tRNA synthetase subfamily. In terms of assembly, homodimer. The tRNA molecule binds across the dimer.

It localises to the cytoplasm. It catalyses the reaction tRNA(Ser) + L-serine + ATP = L-seryl-tRNA(Ser) + AMP + diphosphate + H(+). The enzyme catalyses tRNA(Sec) + L-serine + ATP = L-seryl-tRNA(Sec) + AMP + diphosphate + H(+). It participates in aminoacyl-tRNA biosynthesis; selenocysteinyl-tRNA(Sec) biosynthesis; L-seryl-tRNA(Sec) from L-serine and tRNA(Sec): step 1/1. Functionally, catalyzes the attachment of serine to tRNA(Ser). Is also able to aminoacylate tRNA(Sec) with serine, to form the misacylated tRNA L-seryl-tRNA(Sec), which will be further converted into selenocysteinyl-tRNA(Sec). The polypeptide is Serine--tRNA ligase (Rhodococcus jostii (strain RHA1)).